Reading from the N-terminus, the 89-residue chain is Protein M7 (89 aa).

The first 25 residues, 1–25, serve as a signal peptide directing secretion; that stretch reads MAAMKSLATAILVVLLLRRLPRGLS. Intrachain disulfides connect cysteine 28/cysteine 65, cysteine 38/cysteine 54, cysteine 55/cysteine 80, and cysteine 67/cysteine 87.

This sequence belongs to the A9/FIL1 family. As to expression, tapetum of anthers.

The protein resides in the secreted. This chain is Protein M7 (M7), found in Lilium henryi (Henry's lily).